Reading from the N-terminus, the 676-residue chain is Exostosin-like 1 (676 aa).

At 1–9 the chain is on the cytoplasmic side; the sequence is MQSWRRRKS. A helical; Signal-anchor for type II membrane protein membrane pass occupies residues 10–30; sequence LWLALSASWLLLVLLGGFSLL. Residues 31-676 are Lumenal-facing; sequence RLALPPRPRP…RKKYRSLEKP (646 aa). Residues 238–264 form a disordered region; sequence TADTGSSACPWDGRCEQDPGPGQTQRQ. An N-linked (GlcNAc...) asparagine glycan is attached at Asn269. Residues Cys584 and Cys634 are joined by a disulfide bond. Positions 610-631 are disordered; it reads RQEAAPLAPGGPGPRPKPPAPA. Residues 618-631 show a composition bias toward pro residues; that stretch reads PGGPGPRPKPPAPA.

It belongs to the glycosyltransferase 47 family.

The protein resides in the endoplasmic reticulum membrane. It carries out the reaction 3-O-{[(1-&gt;4)-beta-D-GlcA-(1-&gt;4)-alpha-D-GlcNAc](n)-(1-&gt;4)-beta-D-GlcA-(1-&gt;3)-beta-D-Gal-(1-&gt;3)-beta-D-Gal-(1-&gt;4)-beta-D-Xyl}-L-seryl-[protein] + UDP-N-acetyl-alpha-D-glucosamine = 3-O-{alpha-D-GlcNAc-[(1-&gt;4)-beta-D-GlcA-(1-&gt;4)-alpha-D-GlcNAc](n)-(1-&gt;4)-beta-D-GlcA-(1-&gt;3)-beta-D-Gal-(1-&gt;3)-beta-D-Gal-(1-&gt;4)-beta-D-Xyl}-L-seryl-[protein] + UDP + H(+). It participates in protein modification; protein glycosylation. Its function is as follows. Glycosyltransferase required for the biosynthesis of heparan-sulfate (HS). Transfers N-acetyl-alpha-D-glucosamine to the nascent HS chain (GlcNAcT-II activity). Appears to lack GlcNAcT I and GlcAT-II activities. In Homo sapiens (Human), this protein is Exostosin-like 1 (EXTL1).